The following is a 216-amino-acid chain: GTP:AMP phosphotransferase, mitochondrial (216 aa).

Residue 15-20 (GSGKGT) coordinates GTP. The tract at residues 35–64 (STGDILRQNIIKNTELGKKAKQYIAEGKLV) is NMPbind. AMP is bound by residues threonine 36, arginine 41, 62–64 (KLV), 89–92 (GFPR), and glutamine 96. An LID region spans residues 125–162 (NRWIHAPSGRVYNIGFKNPKVPGKDDVTGEPLMQREDD). GTP-binding positions include arginine 126 and 135–136 (VY). AMP-binding residues include arginine 159 and arginine 170. Threonine 199 lines the GTP pocket.

Belongs to the adenylate kinase family. AK3 subfamily. In terms of assembly, monomer. Ubiquitously expressed with highest levels expressed in the abdomen, suggesting a function in muscle tissues.

The protein resides in the mitochondrion matrix. It carries out the reaction a ribonucleoside 5'-triphosphate + AMP = a ribonucleoside 5'-diphosphate + ADP. Involved in maintaining the homeostasis of cellular nucleotides by catalyzing the interconversion of nucleoside phosphates. Has GTP:AMP phosphotransferase and ITP:AMP phosphotransferase activities. The protein is GTP:AMP phosphotransferase, mitochondrial of Drosophila melanogaster (Fruit fly).